Consider the following 127-residue polypeptide: uncharacterized protein (127 aa).

Disordered stretches follow at residues 1–22 and 53–106; these read MLPA…KMKG and LVGK…PGPK. The span at 76 to 95 shows a compositional bias: basic and acidic residues; the sequence is PNGEAHAEQARRKISVEEKQ.

The protein localises to the mitochondrion. This is an uncharacterized protein from Arabidopsis thaliana (Mouse-ear cress).